Here is a 155-residue protein sequence, read N- to C-terminus: SsrA-binding protein (155 aa).

This sequence belongs to the SmpB family.

The protein resides in the cytoplasm. Functionally, required for rescue of stalled ribosomes mediated by trans-translation. Binds to transfer-messenger RNA (tmRNA), required for stable association of tmRNA with ribosomes. tmRNA and SmpB together mimic tRNA shape, replacing the anticodon stem-loop with SmpB. tmRNA is encoded by the ssrA gene; the 2 termini fold to resemble tRNA(Ala) and it encodes a 'tag peptide', a short internal open reading frame. During trans-translation Ala-aminoacylated tmRNA acts like a tRNA, entering the A-site of stalled ribosomes, displacing the stalled mRNA. The ribosome then switches to translate the ORF on the tmRNA; the nascent peptide is terminated with the 'tag peptide' encoded by the tmRNA and targeted for degradation. The ribosome is freed to recommence translation, which seems to be the essential function of trans-translation. This chain is SsrA-binding protein, found in Streptococcus pyogenes serotype M4 (strain MGAS10750).